The chain runs to 303 residues: MSPAPAGATALPGPLPGDVHDAVLALAAAASRADGATSLSEDAVLRLRAGDGAVQHLVRHEDGVLAGYAQLVPSGDGEGDGFEGELLVHPGHRRRGHGGALLAAVEERAGARPVRLWSHGDTPGASALAARAGWTRARELLRMERTSAGLSDLAVPDLAAGLAVRPFVPGADDAAWVALNAAAFATHPEQGRWTLDDLRARLAEPWFDPALLLLAEAPDGLAAFCWMKVEDGLGELYVLGVDPARSGAGLGRALLVRGLRAVAGRVDRVDLYVDGDNLRAVRLYAGLGFSRAATDVQYASGPR.

N-acetyltransferase domains follow at residues 10 to 156 (ALPG…LAVP) and 162 to 303 (LAVR…SGPR). A 1D-myo-inositol 2-(L-cysteinylamino)-2-deoxy-alpha-D-glucopyranoside-binding site is contributed by E41. Residue 86-88 (LLV) participates in acetyl-CoA binding. Positions 189, 228, and 235 each coordinate 1D-myo-inositol 2-(L-cysteinylamino)-2-deoxy-alpha-D-glucopyranoside. Residues 239 to 241 (LGV) and 246 to 252 (SGAGLGR) contribute to the acetyl-CoA site. Y272 serves as a coordination point for 1D-myo-inositol 2-(L-cysteinylamino)-2-deoxy-alpha-D-glucopyranoside. 277–282 (NLRAVR) serves as a coordination point for acetyl-CoA.

This sequence belongs to the acetyltransferase family. MshD subfamily. As to quaternary structure, monomer.

It carries out the reaction 1D-myo-inositol 2-(L-cysteinylamino)-2-deoxy-alpha-D-glucopyranoside + acetyl-CoA = mycothiol + CoA + H(+). In terms of biological role, catalyzes the transfer of acetyl from acetyl-CoA to desacetylmycothiol (Cys-GlcN-Ins) to form mycothiol. The chain is Mycothiol acetyltransferase from Kineococcus radiotolerans (strain ATCC BAA-149 / DSM 14245 / SRS30216).